The chain runs to 508 residues: Enhancer of mRNA-decapping protein 3 (508 aa).

The 68-residue stretch at 1–68 (MAMDWLGSIV…ITELKILEIP (68 aa)) folds into the Sm domain. The segment at 1-79 (MAMDWLGSIV…PGDNQQVGDL (79 aa)) is required for P-body targeting and interaction with DCP1A. The interval 98–194 (NGTGKVVKKP…KNKDDECFGD (97 aa)) is disordered. Phosphoserine occurs at positions 131, 138, 140, and 161. Positions 191 to 296 (CFGDDIEELP…HKKLLSVAEK (106 aa)) are required for interaction with DDX6. The region spanning 192–228 (FGDDIEELPDTDFDFEGNLALFDKAAVFEEIDTYERR) is the DFDF domain. The YjeF N-terminal domain occupies 283-487 (SYELHKKLLS…DIGIPQQVFQ (205 aa)).

The protein belongs to the EDC3 family. Homodimer (via YjeF N-terminal domain). Forms a complex with DCP1A, DCP2, DDX6 and EDC4/HEDLS, within this complex directly interacts with DCP1A and DDX6. Interacts with ZFP36.

It localises to the cytoplasm. It is found in the P-body. Functionally, binds single-stranded RNA. Involved in the process of mRNA degradation and in the positive regulation of mRNA decapping. The sequence is that of Enhancer of mRNA-decapping protein 3 (Edc3) from Mus musculus (Mouse).